Consider the following 1099-residue polypeptide: Zinc finger protein basonuclin-2 (1099 aa).

Positions 45-66 are disordered; that stretch reads EEAEVDVRERETQRDREPKRAR. Positions 49–66 are enriched in basic and acidic residues; that stretch reads VDVRERETQRDREPKRAR. Residue K277 forms a Glycyl lysine isopeptide (Lys-Gly) (interchain with G-Cter in SUMO2) linkage. Positions 357–385 are disordered; the sequence is LSTQNEYNESSESEVSPTPYKNDQTPNRN. The span at 361–372 shows a compositional bias: low complexity; it reads NEYNESSESEVS. Polar residues predominate over residues 375 to 385; that stretch reads PYKNDQTPNRN. Residues K396, K416, and K421 each participate in a glycyl lysine isopeptide (Lys-Gly) (interchain with G-Cter in SUMO2) cross-link. The segment at 397-423 is disordered; the sequence is TEPACVSPIQNSAPVSDLTKTEHPKSS. The C2H2-type 1 zinc-finger motif lies at 441–464; that stretch reads VFCNACGKTFYDKGTLKIHYNAVH. A Phosphoserine modification is found at S561. Disordered regions lie at residues 622–641 and 648–742; these read EPSA…MPVK and DTAD…EGDE. K641 is covalently cross-linked (Glycyl lysine isopeptide (Lys-Gly) (interchain with G-Cter in SUMO2)). The segment covering 648-661 has biased composition (acidic residues); sequence DTADEFDDEDDDPN. Basic and acidic residues-rich tracts occupy residues 670 to 680 and 719 to 742; these read MSHDNHCHSQE and ERDY…EGDE. The segment at 833–856 adopts a C2H2-type 2 zinc-finger fold; it reads KICYVCKKSFKSSYSVKLHYRNVH. Residues K894 and K919 each participate in a glycyl lysine isopeptide (Lys-Gly) (interchain with G-Cter in SUMO2) cross-link. 2 disordered regions span residues 929 to 948 and 968 to 1008; these read LDVR…HLNG and LQSS…KAEA. Residues 982–995 show a composition bias toward acidic residues; that stretch reads AGSDEGILLDDIDG. 2 C2H2-type zinc fingers span residues 1035 to 1058 and 1063 to 1090; these read IMCN…KTVH and HKCK…PNLH. The tract at residues 1079 to 1099 is disordered; sequence SRNRHSQNPNLHKNIPFTSVD.

As to expression, highly expressed in testis, uterus and small intestine, and weakly expressed in colon and prostate. Also expressed in skin, primary keratinocytes, immortalized keratinocytes, and HeLa and HEK293 cells. Not detected in blood, thymus, spleen or Hep-G2 cells.

The protein localises to the nucleus. Probable transcription factor specific for skin keratinocytes. May play a role in the differentiation of spermatozoa and oocytes. May also play an important role in early urinary-tract development. This chain is Zinc finger protein basonuclin-2, found in Homo sapiens (Human).